Here is a 164-residue protein sequence, read N- to C-terminus: MTRSKSTTETTRAARQARIVAILSSAQVRSQSELAALLADEGIEVTQATLSRDLEELGAVKLRGADGGVGVYMVPEDGSPVRGVSGGTARLSRLLSELLVSADASANLAVLRTPPGAADYLASAIDRAALPYVVGTIAGDDTVFVAARDPMTGAELADTLEKLT.

Belongs to the ArgR family.

Its subcellular location is the cytoplasm. It functions in the pathway amino-acid biosynthesis; L-arginine biosynthesis [regulation]. Regulates arginine biosynthesis genes. This chain is Arginine repressor, found in Mycolicibacterium paratuberculosis (strain ATCC BAA-968 / K-10) (Mycobacterium paratuberculosis).